A 214-amino-acid chain; its full sequence is 3,4-dihydroxy-2-butanone 4-phosphate synthase (214 aa).

D-ribulose 5-phosphate is bound by residues 40 to 41, D45, 153 to 157, and E177; these read RE and RRGHT. Residue E41 participates in Mg(2+) binding. H156 contributes to the Mg(2+) binding site.

The protein belongs to the DHBP synthase family. In terms of assembly, homodimer. Mg(2+) serves as cofactor. Mn(2+) is required as a cofactor.

The enzyme catalyses D-ribulose 5-phosphate = (2S)-2-hydroxy-3-oxobutyl phosphate + formate + H(+). It functions in the pathway cofactor biosynthesis; riboflavin biosynthesis; 2-hydroxy-3-oxobutyl phosphate from D-ribulose 5-phosphate: step 1/1. In terms of biological role, catalyzes the conversion of D-ribulose 5-phosphate to formate and 3,4-dihydroxy-2-butanone 4-phosphate. In Rhodospirillum rubrum (strain ATCC 11170 / ATH 1.1.1 / DSM 467 / LMG 4362 / NCIMB 8255 / S1), this protein is 3,4-dihydroxy-2-butanone 4-phosphate synthase.